The following is a 397-amino-acid chain: Elongation factor Tu (397 aa).

Residues 10-206 (KPHVNIGTIG…AIDSYIPTPE (197 aa)) form the tr-type G domain. The tract at residues 19-26 (GHVDHGKT) is G1. 19 to 26 (GHVDHGKT) provides a ligand contact to GTP. Mg(2+) is bound at residue threonine 26. A G2 region spans residues 60–64 (GITIN). Positions 81–84 (DCPG) are G3. GTP contacts are provided by residues 81–85 (DCPGH) and 136–139 (NKAD). The G4 stretch occupies residues 136–139 (NKAD). Residues 174–176 (SAL) are G5.

It belongs to the TRAFAC class translation factor GTPase superfamily. Classic translation factor GTPase family. EF-Tu/EF-1A subfamily. In terms of assembly, monomer.

The protein localises to the cytoplasm. It catalyses the reaction GTP + H2O = GDP + phosphate + H(+). Its function is as follows. GTP hydrolase that promotes the GTP-dependent binding of aminoacyl-tRNA to the A-site of ribosomes during protein biosynthesis. In Clostridium botulinum (strain Loch Maree / Type A3), this protein is Elongation factor Tu.